The sequence spans 411 residues: LIM domain-binding protein 1 (411 aa).

The residue at position 2 (Ser-2) is an N-acetylserine. Position 61 is a phosphothreonine (Thr-61). Residues Ser-265 and Ser-302 each carry the phosphoserine modification. Disordered regions lie at residues 283-330 (APPA…TFAL) and 367-411 (DAAN…QASQ). The segment covering 302-318 (SGGSTMSSGGGNTNNSN) has biased composition (low complexity). Residues 336–375 (DVMVVGEPTLMGGEFGDEDERLITRLENTQFDAANGIDDE) form the LIM interaction domain (LID) domain.

The protein belongs to the LDB family. Interacts with ESR1. Forms homodimers and heterodimers. Interacts with and activates LHX1/LIM1. Interacts with the LIM domains of ISL1 and LMO2. Can assemble in a complex with LMO2 and TAL1/SCL but does not interact with TAL1/SCL directly. Strongly interacts with the LIM2 domain of LMX1A and more weakly with the LIM1 domain. Homodimerization is not required for, and does not effect, LMX1A-binding. Component of a nuclear TAL-1 complex composed at least of CBFA2T3, LDB1, TAL1 and TCF3. Interacts with LHX6 and LHX9. At neuronal promoters, forms a complex with LHX3 involved in the specification of interneurons, in motor neurons, it is displaced by ISL1 to form a ternary complex in which ISL1 contacts both LHX3 and LDB1. Interacts with SLK; leading to negatively regulate SLK kinase activity. Interacts with YWHAZ. Interacts with PRDM1/BLIMP1. Interacts with LMO4. Interacts with RLIM/RNF12; the interaction inhibits the ubiquitination of LMO proteins. In terms of processing, ubiquitinated by RLIM/RNF12, leading to its degradation by the proteasome. As to expression, expressed in a wide range of adult tissues including brain, heart, skeletal muscle, colon, thymus, spleen, kidney, liver, small intestine, lung and peripheral blood leukocytes.

It localises to the nucleus. Functionally, binds to the LIM domain of a wide variety of LIM domain-containing transcription factors. May regulate the transcriptional activity of LIM-containing proteins by determining specific partner interactions. Plays a role in the development of interneurons and motor neurons in cooperation with LHX3 and ISL1. Acts synergistically with LHX1/LIM1 in axis formation and activation of gene expression. Acts with LMO2 in the regulation of red blood cell development, maintaining erythroid precursors in an immature state. The polypeptide is LIM domain-binding protein 1 (LDB1) (Homo sapiens (Human)).